Reading from the N-terminus, the 694-residue chain is MTEQYSVAVGEAANEHETAPRRNIRVKDQPLIRPINSSASTLYEFALECFTKGGKRDGMAWRDIIDIHETKKTIVKRVDGKDKPIEKTWLYYELTPYITMTYEEMICVMHDIGRGLIKIGVKPNGENKFHIFASTSHKWMKTFLGCMSQGIPVVTAYDTLGESGLIHSMVETDSVAIFTDNQLLSKLAVPLKTAKNVKFVIHNEPIDPSDKRQNGKLYKAAKDAVDKIKEVRPDIKIYSFDEIIEIGKKAKDEVELHFPKPEDPACIMYTSGSTGTPKGVVLTHYNIVAGIGGVGHNVIGWIGPTDRIIAFLPLAHIFELTFEFEAFYWNGILGYANVKTLTPTSTRNCQGDLMEFKPTVMVGVAAVWETVRKGILAKINELPGWSQTLFWTVYALKERNIPCSGLLSGLIFKRIREATGGNLRFILNGGSAISIDAQKFLSNLLCPMLIGYGLTEGVANACVLEPEHFDYGIAGDLVGTITAKLVDVEDLGYFAKNNQGELLFKGAPICSEYYKNPEETAAAFTDDGWFRTGDIAEWTPKGQVKIIDRKKNLVKTLNGEYIALEKLESIYRSNPYVQNICVYADENKVKPVGIVVPNLGHLSKLAIELGIMVPGEDVESYIHEKKLQDAVCKDMLSTAKSQGLNGIELLCGIVFFEEEWTPENGLVTSAQKLKRRDILAAVKPDVERVYKENT.

Positions 1–21 (MTEQYSVAVGEAANEHETAPR) are disordered. 269–280 (YTSGSTGTPKGV) is a binding site for ATP. The FACS motif lies at 527–576 (DGWFRTGDIAEWTPKGQVKIIDRKKNLVKTLNGEYIALEKLESIYRSNPY).

It belongs to the ATP-dependent AMP-binding enzyme family. Interacts with FAT1. Mg(2+) is required as a cofactor.

The protein resides in the lipid droplet. It carries out the reaction a long-chain fatty acid + ATP + CoA = a long-chain fatty acyl-CoA + AMP + diphosphate. The catalysed reaction is (9Z)-hexadecenoate + ATP + CoA = (9Z)-hexadecenoyl-CoA + AMP + diphosphate. The enzyme catalyses (9Z)-octadecenoate + ATP + CoA = (9Z)-octadecenoyl-CoA + AMP + diphosphate. It catalyses the reaction hexadecanoate + ATP + CoA = hexadecanoyl-CoA + AMP + diphosphate. In terms of biological role, activates long-chain fatty acids (LCFA) by esterification of the fatty acids into metabolically active CoA-thioesters for subsequent degradation or incorporation into phospholipids. Also facilitates the transport of LCFAs into the cell, either by active transport or by decreasing the intracellular LCFA concentration. Contributes, with FAA1, to the activation of imported myristate. Also involved in long-chain base (LCB) uptake. In contrast ot LCFA uptake, LCB uptake does not require ATP, suggesting that the enzyme is directly involved in LCB uptake. Involved in the sphingolipid-to-glycerolipid metabolic pathway, converting the sphingolipid metabolite hexadecenoic acid to hexadecenoyl-CoA, which is then further converted to glycerolipids. The polypeptide is Long-chain-fatty-acid--CoA ligase 4 (FAA4) (Saccharomyces cerevisiae (strain ATCC 204508 / S288c) (Baker's yeast)).